We begin with the raw amino-acid sequence, 199 residues long: Probable GTP-binding protein EngB (199 aa).

Residues 28 to 199 (DLPEVALAGR…EAWDTILAEL (172 aa)) enclose the EngB-type G domain. Residues 36–43 (GRSNVGKS), 63–67 (GKTQL), 81–84 (DVPG), 148–151 (TKAD), and 180–182 (FSS) contribute to the GTP site. Ser43 and Thr65 together coordinate Mg(2+).

The protein belongs to the TRAFAC class TrmE-Era-EngA-EngB-Septin-like GTPase superfamily. EngB GTPase family. Mg(2+) serves as cofactor.

Its function is as follows. Necessary for normal cell division and for the maintenance of normal septation. The polypeptide is Probable GTP-binding protein EngB (Streptococcus thermophilus (strain CNRZ 1066)).